A 401-amino-acid chain; its full sequence is Acetate kinase (401 aa).

Asparagine 9 contacts Mg(2+). ATP is bound at residue lysine 16. Arginine 88 is a substrate binding site. The Proton donor/acceptor role is filled by aspartate 147. ATP is bound by residues 207-211 (HLGNG), 282-284 (DCR), and 333-337 (GIGEN). A Mg(2+)-binding site is contributed by glutamate 388.

Belongs to the acetokinase family. As to quaternary structure, homodimer. It depends on Mg(2+) as a cofactor. Requires Mn(2+) as cofactor.

It localises to the cytoplasm. The enzyme catalyses acetate + ATP = acetyl phosphate + ADP. The protein operates within metabolic intermediate biosynthesis; acetyl-CoA biosynthesis; acetyl-CoA from acetate: step 1/2. Functionally, catalyzes the formation of acetyl phosphate from acetate and ATP. Can also catalyze the reverse reaction. In Haemophilus influenzae (strain PittEE), this protein is Acetate kinase.